The chain runs to 502 residues: Regulator of hypoxia-inducible factor 1 (502 aa).

11 helical membrane-spanning segments follow: residues 54–74, 92–112, 138–158, 188–208, 241–261, 272–292, 335–355, 367–387, 396–416, 437–457, and 465–485; these read LLAW…VFSC, LDVL…NHTG, IFGA…VLSG, LAPS…NALL, MGYL…PIFL, MALT…YCTA, GPFL…YIMV, LIVA…PNAG, TAVF…ALYF, AYLL…LQAA, and LVLP…YLFI.

In terms of tissue distribution, expressed in intestine, some sensory neurons in the head, body wall muscles and socket cells.

It is found in the endoplasmic reticulum membrane. Functionally, involved in the response to variation in environmental oxygen levels by inhibiting hif-1-mediated gene transcription in a vhl-1-independent manner. Plays a role in susceptibility to killing mediated by P.aeruginosa and by pore-forming toxins produced by B.thuringiensis. Probably by preventing hif-1 transcriptional activity, regulates behavioral responses, such as locomotion speed following acute reoxygenation. Plays a role in normal egg-laying probably by regulating spermatogenesis and in body morphogenesis. The sequence is that of Regulator of hypoxia-inducible factor 1 from Caenorhabditis elegans.